Reading from the N-terminus, the 465-residue chain is U4/U6 small nuclear ribonucleoprotein PRP4 (465 aa).

WD repeat units follow at residues Val-173 to Gln-212, Ser-216 to Arg-256, Gly-263 to Leu-302, Gly-305 to Thr-344, Gly-347 to Leu-386, Ala-391 to Ser-432, and Gly-435 to Trp-464.

Component of the U4/U6-U5 tri-snRNP complex composed of the U4, U6 and U5 snRNAs and at least PRP3, PRP4, PRP6, PRP8, PRP18, PRP31, PRP38, SNU13, SNU23, SNU66, SNU114, SPP381, SMB1, SMD1, SMD2, SMD3, SMX2, SMX3, LSM2, LSM3, LSM4, LSM5, LSM6, LSM7, LSM8, BRR2 and DIB1.

It localises to the nucleus. Its function is as follows. Involved in RNA splicing. Is required for the association of U4/U6 snRNP with U5 snRNP in an early step of spliceosome assembly. The protein is U4/U6 small nuclear ribonucleoprotein PRP4 (PRP4) of Saccharomyces cerevisiae (strain ATCC 204508 / S288c) (Baker's yeast).